We begin with the raw amino-acid sequence, 918 residues long: MNAQLDGLSVSSSSTGSLGSAAAAAGGGGGAGLRLLSANVRQLHQALTALLSEPEREQFTHCLNAYHARRNVFDLVRTLRVLLDSPVKRRLLPMLRLVIPRSDQLLFDQYTAEGLYLPATTPYRQPAWAAPDGAGPGEVRLVSLRRAKAHEGLGFSIRGGSEHGVGIYVSLVEPGSLAEKEGLRVGDQILRVNDKSLARVTHAEAVKALKGSKKLVLSVYSAGRIPGGYVTNHIYTWVDPQGRSTSPPSSLPQPHGSTLRQREDDRRSTLHLLQSGDEKKVNLVLGDGRSLGLTIRGGAEYGLGIYITGVDPGSEAESSGLKVGDQILEVNGRSFLNILHDEAVKLLKSSRHLILTVKDVGRLPHARTTVDQTKWIASSRIGESVANSAGFPGDHTEEGTSKPGFYKGPAGSQVTLSSLGNQTRALLDDQARHLLTEQERATMMYYLAQYRGGTISVEAMVMALFELLNTHAKFSLLSEVRSIISPQDLDRFDHLVLRREIESMKARQPPGPGVGDTYSMVSYSDTGSSTGSHGTSTTVSSARERLLWLIDLMENTLDLEGTGETTQGSTNALPDVSVDDVKSPSEDLPGIKPPPPPPPLAQGHDRLLGQPRKPGREDPAPLSSAAHSGIVFSAPRNRSPPPGTAPTPGPSSAQDSPSSPIYASISHANPSSRKPLDTHLALVNQHPIGPFPRVQSPPHLKSPPAETPGAGACLPPPSPSEHPDAVGANQHFVLVEVHRPDSEPDVNEVRALPQTRTASTLSQLSDSGQTLSEDSGVDAGETEASTSGRGRQTASAKNKNGKEQPRTERTAEGANKPPGLLEPTSTLVRVRKSAATLGIAIEGGANTRQPLPRIVTIQRGGSAHNCGQLKVGHVILEVNGQTLRGKEHKEAARIIAEAFKTKERDYIDFLVTEFNVML.

The region spanning Leu-141–Arg-224 is the PDZ 1 domain. Positions Pro-240–Arg-266 are disordered. One can recognise a PDZ 2 domain in the interval Lys-280–Arg-362. 3 disordered regions span residues Asn-387–Lys-407, Ser-503–Thr-538, and Glu-560–Thr-824. Over residues Ser-522 to Thr-538 the composition is skewed to low complexity. Positions Gly-563 to Ala-572 are enriched in polar residues. 2 stretches are compositionally biased toward pro residues: residues Ile-591–Leu-600 and Arg-638–Gly-649. Polar residues predominate over residues Gln-654–Ser-672. At Ser-696 the chain carries Phosphoserine. Polar residues-rich tracts occupy residues Gln-754 to Glu-773 and Glu-783 to Asn-798. Basic and acidic residues predominate over residues Asn-800–Ala-811. The PDZ 3 domain maps to Leu-827–Leu-910.

As to quaternary structure, forms homooligomers. Interacts (via C-terminal PDZ domain) with MYO15A; this interaction is necessary for localization of WHRN to stereocilia tips. Interacts (via C-terminal PDZ domain) with MPP1/p55. Interacts with LRRC4C/NGL1. Interacts with MYO7A. Interacts with RPGR. Interacts with EPS8. Interacts with CASK. Interacts with CIB2. Component of USH2 complex, composed of ADGRV1, PDZD7, USH2A and WHRN. Interacts (via PDZ domains) with PDZD7; the interaction is direct. Interacts (via N-terminal PDZ domain) with USH2A (via cytoplasmic region). Interacts with ADGRV1/MASS1 (via cytoplasmic region). In terms of tissue distribution, expressed in the retina. Colocalizes with RPGR in the photoreceptor connecting cilium, a thin bridge linking the cell body and the light-sensing outer segment (at protein level). Detected in the inner ear throughout development from embryonic day 12 to 20 days after birth. Displays a dynamic pattern of expression after birth, demonstrating an ordered appearance and fade-out across stereocilia rows. Isoforms 5, 6, 7 and 8 are not detected in the retina.

It is found in the cytoplasm. It localises to the cell projection. The protein resides in the stereocilium. The protein localises to the growth cone. Its subcellular location is the photoreceptor inner segment. It is found in the synapse. Involved in hearing and vision as member of the USH2 complex. Necessary for elongation and maintenance of inner and outer hair cell stereocilia in the organ of Corti in the inner ear. Involved in the maintenance of the hair bundle ankle region, which connects stereocilia in cochlear hair cells of the inner ear. In retina photoreceptors, required for the maintenance of periciliary membrane complex that seems to play a role in regulating intracellular protein transport. The polypeptide is Whirlin (Mus musculus (Mouse)).